A 468-amino-acid polypeptide reads, in one-letter code: MTSVITSRARHVAVIGLGAAGLVAVRELRREGHTVIGFEREKHVGGLWVYTDRVDSDSVSVDPDRTIVHSSIYQSLRTNLPRECMGYSDFPFVTRSSDGDPRRYPDHREVLMYLQDFAKEFKIEDMIRFETEVLCVEPSPENNRKWRVQFKSSNGVSGEEIFDAVVVCNGHFTEPRLAHIPGIESWPGKQIHSHNYRIPDPFKDEVVIVIGSQASGNDISTDIATIAKEVHISSKMVASDSYGCYDNLRIHPTIYRAREDGSVVFRNGKVVFADAIVHCTGYKYHFPFLKTSGYVTVEDNRVGPLYKHVFPPALAPGISFIGLPFMGLQFFMFEIQSKWVASVLSGRVKLPAEDKMMEEAVAFYSKLEDLGIPKRYTHFLTDPRGNPMLGTFKPEDAVVISQSDYFNWIAKQCGCTSIERWRERLYNVAIKKVFFGGDSYRDRWDDDQLIEEVYREFAKLKPNQDCSS.

G16–G21 contacts FAD. G211–G216 is a binding site for NADP(+).

This sequence belongs to the FMO family. The cofactor is FAD.

Its function is as follows. Catalyzes the conversion of methylthioalkyl glucosinolates of any chain length into methylsulfinylalkyl glucosinolates. This is Flavin-containing monooxygenase FMO GS-OX-like 1 from Arabidopsis thaliana (Mouse-ear cress).